Here is a 499-residue protein sequence, read N- to C-terminus: Aspartyl/glutamyl-tRNA(Asn/Gln) amidotransferase subunit B (499 aa).

This sequence belongs to the GatB/GatE family. GatB subfamily. As to quaternary structure, heterotrimer of A, B and C subunits.

It catalyses the reaction L-glutamyl-tRNA(Gln) + L-glutamine + ATP + H2O = L-glutaminyl-tRNA(Gln) + L-glutamate + ADP + phosphate + H(+). It carries out the reaction L-aspartyl-tRNA(Asn) + L-glutamine + ATP + H2O = L-asparaginyl-tRNA(Asn) + L-glutamate + ADP + phosphate + 2 H(+). In terms of biological role, allows the formation of correctly charged Asn-tRNA(Asn) or Gln-tRNA(Gln) through the transamidation of misacylated Asp-tRNA(Asn) or Glu-tRNA(Gln) in organisms which lack either or both of asparaginyl-tRNA or glutaminyl-tRNA synthetases. The reaction takes place in the presence of glutamine and ATP through an activated phospho-Asp-tRNA(Asn) or phospho-Glu-tRNA(Gln). This chain is Aspartyl/glutamyl-tRNA(Asn/Gln) amidotransferase subunit B, found in Leifsonia xyli subsp. xyli (strain CTCB07).